Reading from the N-terminus, the 141-residue chain is Large ribosomal subunit protein uL11 (141 aa).

Belongs to the universal ribosomal protein uL11 family. In terms of assembly, part of the ribosomal stalk of the 50S ribosomal subunit. Interacts with L10 and the large rRNA to form the base of the stalk. L10 forms an elongated spine to which L12 dimers bind in a sequential fashion forming a multimeric L10(L12)X complex. One or more lysine residues are methylated.

Functionally, forms part of the ribosomal stalk which helps the ribosome interact with GTP-bound translation factors. The chain is Large ribosomal subunit protein uL11 from Brevibacillus brevis (strain 47 / JCM 6285 / NBRC 100599).